The following is a 26-amino-acid chain: Photosystem II stability/assembly factor HCF136, chloroplastic (26 aa).

It belongs to the Ycf48 family.

The protein resides in the plastid. It is found in the chloroplast thylakoid lumen. In terms of biological role, essential for photosystem II (PSII) biogenesis; required for assembly of an early intermediate in PSII assembly that includes D2 (psbD) and cytochrome b559. This chain is Photosystem II stability/assembly factor HCF136, chloroplastic, found in Populus euphratica (Euphrates poplar).